The sequence spans 286 residues: MAGGEHGVNGQHEETRAMEEGSRDHQARCENSEQDGGSKSSSNNHPMFSVQFAQKVIAEILGTFFLIFAGCAAVAVNKRTGGTVTFPGICITWGLAVMVMVYSVGHISGAHLNPAVTLAFATCGRFPWRRVPAYAAAQVAGSAAASAALRALFGGAPEHFFGTAPAGSDVQSLAMEFIITFYLMFVVSGVATDNRAIGELAGLAVGATVLVNVLFAGPISGASMNPARTIGPAIILGRYTGIWVYIAGPVFGAVAGAWAYNLIRFTDKPLREITMTASFIRSTRRN.

The disordered stretch occupies residues Met1–Asn44. The span at Gln11–Asn31 shows a compositional bias: basic and acidic residues. Polar residues predominate over residues Gln34–Asn44. 2 helical membrane passes run Val56 to Val76 and Val84 to Val104. Positions Asn113 to Ala115 match the NPA 1 motif. The next 3 helical transmembrane spans lie at Val131 to Phe153, Ser172 to Thr192, and Leu200 to Ser220. Positions Asn225–Ala227 match the NPA 2 motif. Residues Tyr239 to Ala259 form a helical membrane-spanning segment.

It belongs to the MIP/aquaporin (TC 1.A.8) family. NIP (TC 1.A.8.12) subfamily.

It localises to the membrane. In terms of biological role, aquaporins facilitate the transport of water and small neutral solutes across cell membranes. This chain is Aquaporin NIP1-3 (NIP1-3), found in Oryza sativa subsp. japonica (Rice).